Here is a 315-residue protein sequence, read N- to C-terminus: Ribose-phosphate pyrophosphokinase (315 aa).

Residues 37–39 (DGE) and 96–97 (RQ) each bind ATP. Positions 131 and 170 each coordinate Mg(2+). Residue Lys-194 is part of the active site. D-ribose 5-phosphate-binding positions include Arg-196, Asp-220, and 224-228 (DTGGT).

It belongs to the ribose-phosphate pyrophosphokinase family. Class I subfamily. In terms of assembly, homohexamer. The cofactor is Mg(2+).

The protein localises to the cytoplasm. It catalyses the reaction D-ribose 5-phosphate + ATP = 5-phospho-alpha-D-ribose 1-diphosphate + AMP + H(+). It functions in the pathway metabolic intermediate biosynthesis; 5-phospho-alpha-D-ribose 1-diphosphate biosynthesis; 5-phospho-alpha-D-ribose 1-diphosphate from D-ribose 5-phosphate (route I): step 1/1. Involved in the biosynthesis of the central metabolite phospho-alpha-D-ribosyl-1-pyrophosphate (PRPP) via the transfer of pyrophosphoryl group from ATP to 1-hydroxyl of ribose-5-phosphate (Rib-5-P). The sequence is that of Ribose-phosphate pyrophosphokinase from Salmonella typhi.